The chain runs to 365 residues: Glycolaldehyde reductase (365 aa).

NAD(+) is bound by residues Asp37, Gly94, Lys95, Thr116, Ser119, Ser125, Leu127, and Tyr131. Zn(2+) is bound by residues Asp171, His254, and His271.

The protein belongs to the iron-containing alcohol dehydrogenase family. Requires Zn(2+) as cofactor.

It carries out the reaction ethylene glycol + NAD(+) = glycolaldehyde + NADH + H(+). With respect to regulation, is subject to substrate inhibition. Its function is as follows. Oxidoreductase involved in the non-carboxylating pentose bisphosphate pathway, a nucleoside degradation pathway present in some halophilic archaea. Catalyzes the reduction of glycolaldehyde to ethylene glycol. Cannot catalyze the oxidation of glycerol 1-phosphate nor the reduction of dihydroxyacetone phosphate (DHAP). This is Glycolaldehyde reductase from Halobacterium salinarum (strain ATCC 700922 / JCM 11081 / NRC-1) (Halobacterium halobium).